A 1604-amino-acid chain; its full sequence is Metabotropic glutamate receptor-like protein R (1604 aa).

Residues 1-27 (MVIKKPFIFIFICFLICLLICIDLTNC) form the signal peptide. Residues 28-1149 (NTINNNNNNN…TDVSKTKIAK (1122 aa)) are Extracellular-facing. A compositionally biased stretch (low complexity) spans 38-69 (NNNNNNNNNNNNNNNNNNNNNNNNNNNNNNDN). The interval 38-72 (NNNNNNNNNNNNNNNNNNNNNNNNNNNNNNDNNEN) is disordered. Residues 98 to 133 (DFYINKIKKEIKDREKYKNNIENEILKINSQKKRKK) are a coiled coil. The segment at 213 to 263 (NNNNNNNNNNNNNNNNNNKNNNNNNNNKNNNNNNNNKNNNNNNNNKNNNKN) is disordered. N-linked (GlcNAc...) asparagine glycans are attached at residues Asn-285, Asn-327, Asn-359, Asn-375, Asn-489, Asn-498, Asn-525, Asn-577, Asn-593, Asn-624, Asn-768, Asn-837, Asn-841, Asn-851, Asn-864, Asn-876, Asn-885, Asn-888, Asn-913, Asn-967, Asn-991, Asn-1097, and Asn-1109. A helical membrane pass occupies residues 1150–1170 (IIIGISAIIVSIGVLITAILT). The Cytoplasmic portion of the chain corresponds to 1171–1184 (FIYRKRKIMRYSNP). A helical transmembrane segment spans residues 1185–1205 (VFLLIILVGCVCGLVSTFVSF). Over 1206 to 1211 (STTSAT) the chain is Extracellular. A helical membrane pass occupies residues 1212–1232 (CSIRMVLIPLFFFIITSAIFI). Residues 1233–1256 (KQYRVYCLIRGVEELHDMSIENSY) lie on the Cytoplasmic side of the membrane. The helical transmembrane segment at 1257–1277 (LLKLQSFILIIPAILIAVSVI) threads the bilayer. Residues 1278–1304 (ATRMHRKYNFDLQKETIQAYCYSKNFY) are Extracellular-facing. The chain crosses the membrane as a helical span at residues 1305-1325 (IIFICLALYEFSILLYGCWIV). Topologically, residues 1326 to 1340 (IKCRQYRSFPGSFNE) are cytoplasmic. A helical transmembrane segment spans residues 1341-1361 (FFYIGVLIYVLTVILVVSIPI). Over 1362–1372 (GFALLNSALTD) the chain is Extracellular. Residues 1373-1393 (FLLYSIPILVLIVAIIGLLFA) form a helical membrane-spanning segment. The Cytoplasmic portion of the chain corresponds to 1394–1604 (PKFYFLFRTD…KSSQNSPLLD (211 aa)). Positions 1457–1604 (TGSNTSDDVS…KSSQNSPLLD (148 aa)) are disordered. Low complexity-rich tracts occupy residues 1471–1527 (FDSP…NKNN) and 1534–1556 (SSSNSSSTADFEISSSGESGRSS). The span at 1563-1572 (NNKKNRRKNS) shows a compositional bias: basic residues. The span at 1573–1584 (LRTPILNSLLSP) shows a compositional bias: polar residues.

The protein belongs to the G-protein coupled receptor 3 family. GABA-B receptor subfamily.

The protein localises to the membrane. In Dictyostelium discoideum (Social amoeba), this protein is Metabotropic glutamate receptor-like protein R (grlR).